Consider the following 502-residue polypeptide: Pyruvate kinase (502 aa).

Arg-54 is a binding site for substrate. K(+)-binding residues include Asn-56, Ser-58, Asp-88, and Thr-89. Residue 56–59 (NFSH) participates in ATP binding. Residues Arg-95 and Lys-184 each coordinate ATP. Residue Glu-252 participates in Mg(2+) binding. Gly-275, Asp-276, and Thr-308 together coordinate substrate. A Mg(2+)-binding site is contributed by Asp-276.

This sequence belongs to the pyruvate kinase family. Homotetramer. The cofactor is Mg(2+). It depends on K(+) as a cofactor.

It catalyses the reaction pyruvate + ATP = phosphoenolpyruvate + ADP + H(+). The protein operates within carbohydrate degradation; glycolysis; pyruvate from D-glyceraldehyde 3-phosphate: step 5/5. Its activity is regulated as follows. Regulated by phosphoenolpyruvate substrate and is allosterically activated by ribose-5-phosphate, AMP and other nucleoside monophosphates but not by fructose-1,6-bisphosphate. This Lactococcus lactis subsp. lactis (strain IL1403) (Streptococcus lactis) protein is Pyruvate kinase (pyk).